A 91-amino-acid polypeptide reads, in one-letter code: Small ribosomal subunit protein uS19 (91 aa).

It belongs to the universal ribosomal protein uS19 family.

Its function is as follows. Protein S19 forms a complex with S13 that binds strongly to the 16S ribosomal RNA. This is Small ribosomal subunit protein uS19 from Shouchella clausii (strain KSM-K16) (Alkalihalobacillus clausii).